The chain runs to 143 residues: Endoribonuclease YbeY (143 aa).

Positions 109, 113, and 119 each coordinate Zn(2+).

It belongs to the endoribonuclease YbeY family. The cofactor is Zn(2+).

The protein resides in the cytoplasm. Its function is as follows. Single strand-specific metallo-endoribonuclease involved in late-stage 70S ribosome quality control and in maturation of the 3' terminus of the 16S rRNA. This chain is Endoribonuclease YbeY, found in Carboxydothermus hydrogenoformans (strain ATCC BAA-161 / DSM 6008 / Z-2901).